A 177-amino-acid polypeptide reads, in one-letter code: Peroxiredoxin-2 (177 aa).

Alanine 2 carries the post-translational modification N-acetylalanine. A Thioredoxin domain is found at alanine 6–tyrosine 164. Cysteine 51 acts as the Cysteine sulfenic acid (-SOH) intermediate in catalysis. Serine 112 is modified (phosphoserine).

The protein belongs to the peroxiredoxin family. AhpC/Prx1 subfamily. As to quaternary structure, homodimer; disulfide-linked, upon oxidation. 5 homodimers assemble to form a ring-like decamer. Interacts with TIPIN. Post-translationally, the enzyme can be inactivated by further oxidation of the cysteine sulfenic acid (C(P)-SOH) to sulphinic acid (C(P)-SO2H) instead of its condensation to a disulfide bond. It can be reactivated by forming a transient disulfide bond with sulfiredoxin SRXN1, which reduces the cysteine sulfinic acid in an ATP- and Mg-dependent manner. In terms of processing, acetylation increases resistance to transition to high molecular-mass complexes. Deacetylated by HDAC6 which decreases reducing activity.

The protein resides in the cytoplasm. It catalyses the reaction a hydroperoxide + [thioredoxin]-dithiol = an alcohol + [thioredoxin]-disulfide + H2O. Functionally, thiol-specific peroxidase that catalyzes the reduction of hydrogen peroxide and organic hydroperoxides to water and alcohols, respectively. Plays a role in cell protection against oxidative stress by detoxifying peroxides and as sensor of hydrogen peroxide-mediated signaling events. Might participate in the signaling cascades of growth factors and tumor necrosis factor-alpha by regulating the intracellular concentrations of H(2)O(2). This is Peroxiredoxin-2 (PRDX2) from Pongo abelii (Sumatran orangutan).